The following is a 117-amino-acid chain: Ribosome-binding factor A (117 aa).

The protein belongs to the RbfA family. In terms of assembly, monomer. Binds 30S ribosomal subunits, but not 50S ribosomal subunits or 70S ribosomes.

Its subcellular location is the cytoplasm. Functionally, one of several proteins that assist in the late maturation steps of the functional core of the 30S ribosomal subunit. Associates with free 30S ribosomal subunits (but not with 30S subunits that are part of 70S ribosomes or polysomes). Required for efficient processing of 16S rRNA. May interact with the 5'-terminal helix region of 16S rRNA. This is Ribosome-binding factor A from Bacillus licheniformis (strain ATCC 14580 / DSM 13 / JCM 2505 / CCUG 7422 / NBRC 12200 / NCIMB 9375 / NCTC 10341 / NRRL NRS-1264 / Gibson 46).